A 150-amino-acid chain; its full sequence is D-aminoacyl-tRNA deacylase (150 aa).

Positions 138 to 139 (GP) match the Gly-cisPro motif, important for rejection of L-amino acids motif.

Belongs to the DTD family. Homodimer.

The protein resides in the cytoplasm. The enzyme catalyses glycyl-tRNA(Ala) + H2O = tRNA(Ala) + glycine + H(+). The catalysed reaction is a D-aminoacyl-tRNA + H2O = a tRNA + a D-alpha-amino acid + H(+). Functionally, an aminoacyl-tRNA editing enzyme that deacylates mischarged D-aminoacyl-tRNAs. Also deacylates mischarged glycyl-tRNA(Ala), protecting cells against glycine mischarging by AlaRS. Acts via tRNA-based rather than protein-based catalysis; rejects L-amino acids rather than detecting D-amino acids in the active site. By recycling D-aminoacyl-tRNA to D-amino acids and free tRNA molecules, this enzyme counteracts the toxicity associated with the formation of D-aminoacyl-tRNA entities in vivo and helps enforce protein L-homochirality. This chain is D-aminoacyl-tRNA deacylase, found in Sorangium cellulosum (strain So ce56) (Polyangium cellulosum (strain So ce56)).